We begin with the raw amino-acid sequence, 155 residues long: Small ribosomal subunit protein uS7cz/uS7cy (155 aa).

This sequence belongs to the universal ribosomal protein uS7 family. As to quaternary structure, part of the 30S ribosomal subunit.

The protein localises to the plastid. The protein resides in the chloroplast. Its function is as follows. One of the primary rRNA binding proteins, it binds directly to 16S rRNA where it nucleates assembly of the head domain of the 30S subunit. This is Small ribosomal subunit protein uS7cz/uS7cy (rps7-A) from Citrus sinensis (Sweet orange).